The sequence spans 364 residues: Aminomethyltransferase (364 aa).

It belongs to the GcvT family. In terms of assembly, the glycine cleavage system is composed of four proteins: P, T, L and H.

The enzyme catalyses N(6)-[(R)-S(8)-aminomethyldihydrolipoyl]-L-lysyl-[protein] + (6S)-5,6,7,8-tetrahydrofolate = N(6)-[(R)-dihydrolipoyl]-L-lysyl-[protein] + (6R)-5,10-methylene-5,6,7,8-tetrahydrofolate + NH4(+). Functionally, the glycine cleavage system catalyzes the degradation of glycine. The chain is Aminomethyltransferase from Klebsiella pneumoniae subsp. pneumoniae (strain ATCC 700721 / MGH 78578).